A 326-amino-acid chain; its full sequence is Vacuolar protein sorting-associated protein 26A (326 aa).

Belongs to the VPS26 family. As to quaternary structure, component of the heterotrimeric retromer cargo-selective complex (CSC) which is believed to associate with variable sorting nexins to form functionally distinct retromer complex variants.

The protein resides in the cytoplasm. Its subcellular location is the endosome membrane. It localises to the early endosome. In terms of biological role, acts as a component of the retromer cargo-selective complex (CSC). The CSC is believed to be the core functional component of retromer or respective retromer complex variants acting to prevent missorting of selected transmembrane cargo proteins into the lysosomal degradation pathway. Retromer mediates retrograde transport of cargo proteins from endosomes to the trans-Golgi network (TGN). This chain is Vacuolar protein sorting-associated protein 26A (vps26a), found in Xenopus tropicalis (Western clawed frog).